Consider the following 356-residue polypeptide: Probable protein phosphatase 2C T23F11.1 (356 aa).

The PPM-type phosphatase domain maps to 23–286; sequence LVGSSCMQGW…DNMTVVLVGL (264 aa). Residues Asp59, Gly60, Asp228, and Asp277 each contribute to the Mn(2+) site. Residues 336 to 356 form a disordered region; that stretch reads NAANQEEEEDDNEPAPANFQV.

Belongs to the PP2C family. Requires Mg(2+) as cofactor. Mn(2+) serves as cofactor.

It catalyses the reaction O-phospho-L-seryl-[protein] + H2O = L-seryl-[protein] + phosphate. The enzyme catalyses O-phospho-L-threonyl-[protein] + H2O = L-threonyl-[protein] + phosphate. This chain is Probable protein phosphatase 2C T23F11.1 (ppm-2), found in Caenorhabditis elegans.